Here is a 527-residue protein sequence, read N- to C-terminus: tRNA (uracil(54)-C(5))-methyltransferase (527 aa).

The region spanning 107-167 (PFERFQEIEV…DTYALADFLE (61 aa)) is the TRAM domain. [4Fe-4S] cluster is bound by residues C182, C188, C191, and C276. 4 residues coordinate S-adenosyl-L-methionine: Q347, Y383, E404, and D451. Catalysis depends on C478, which acts as the Nucleophile. The Proton acceptor role is filled by E517.

Belongs to the class I-like SAM-binding methyltransferase superfamily. RNA M5U methyltransferase family.

It carries out the reaction uridine(54) in tRNA + S-adenosyl-L-methionine = 5-methyluridine(54) in tRNA + S-adenosyl-L-homocysteine + H(+). Functionally, catalyzes the formation of 5-methyl-uridine at position 54 (m5U54) in all tRNA. May also have a role in tRNA stabilization or maturation. This chain is tRNA (uracil(54)-C(5))-methyltransferase, found in Schizosaccharomyces pombe (strain 972 / ATCC 24843) (Fission yeast).